A 47-amino-acid polypeptide reads, in one-letter code: Protein PsbN (47 aa).

A helical transmembrane segment spans residues 7–29 (VAISISCLLISFTGYALYTAFGN).

This sequence belongs to the PsbN family.

Its subcellular location is the plastid membrane. In terms of biological role, may play a role in photosystem I and II biogenesis. This chain is Protein PsbN, found in Aneura mirabilis (Parasitic liverwort).